The sequence spans 357 residues: UPF0283 membrane protein BAbS19_I09770 (357 aa).

The disordered stretch occupies residues methionine 1–lysine 36. Basic and acidic residues predominate over residues glutamate 27–lysine 36. Transmembrane regions (helical) follow at residues isoleucine 78 to leucine 98 and leucine 109 to leucine 129.

This sequence belongs to the UPF0283 family.

The protein resides in the cell inner membrane. The polypeptide is UPF0283 membrane protein BAbS19_I09770 (Brucella abortus (strain S19)).